Reading from the N-terminus, the 179-residue chain is ATP synthase subunit delta (179 aa).

Belongs to the ATPase delta chain family. In terms of assembly, F-type ATPases have 2 components, F(1) - the catalytic core - and F(0) - the membrane proton channel. F(1) has five subunits: alpha(3), beta(3), gamma(1), delta(1), epsilon(1). F(0) has three main subunits: a(1), b(2) and c(10-14). The alpha and beta chains form an alternating ring which encloses part of the gamma chain. F(1) is attached to F(0) by a central stalk formed by the gamma and epsilon chains, while a peripheral stalk is formed by the delta and b chains.

It is found in the cell inner membrane. Its function is as follows. F(1)F(0) ATP synthase produces ATP from ADP in the presence of a proton or sodium gradient. F-type ATPases consist of two structural domains, F(1) containing the extramembraneous catalytic core and F(0) containing the membrane proton channel, linked together by a central stalk and a peripheral stalk. During catalysis, ATP synthesis in the catalytic domain of F(1) is coupled via a rotary mechanism of the central stalk subunits to proton translocation. This protein is part of the stalk that links CF(0) to CF(1). It either transmits conformational changes from CF(0) to CF(1) or is implicated in proton conduction. This Acidithiobacillus ferridurans protein is ATP synthase subunit delta.